A 259-amino-acid polypeptide reads, in one-letter code: MIEIKNIHKQFGIHHVLKGINLTVRKGEVVTIIGPSGSGKTTFLRCLNLLERPDEGIISIHDKVINCRFPSKKEVHWLRKQTAMVFQQYHLFAHKTVIENVMEGLTIARKMRKQDAYAVAENELRKVGLQDKLNAYPSQLSGGQKQRVGIARALAIHPDVLLFDEPTAALDPELVGEVLEVMLEIVKTGATMIVVTHEMEFARRVSDQVVFMDEGVIVEQGTPEEVFRHTKKDRTRQFLRRVSPEYLFEPKEHIKEPVI.

Positions 2 to 239 (IEIKNIHKQF…TKKDRTRQFL (238 aa)) constitute an ABC transporter domain. 34-41 (GPSGSGKT) lines the ATP pocket.

It belongs to the ABC transporter superfamily. L-cystine importer (TC 3.A.1.3.13) family. The complex is composed of two ATP-binding proteins (TcyN), two transmembrane proteins (TcyL and TcyM) and two solute-binding proteins (TcyJ and TcyK).

It localises to the cell membrane. Its function is as follows. Part of the ABC transporter complex TcyJKLMN involved in L-cystine import. Responsible for energy coupling to the transport system. Is also involved in cystathionine, djenkolate, and S-methylcysteine transport. The protein is L-cystine import ATP-binding protein TcyN (tcyN) of Bacillus subtilis (strain 168).